A 484-amino-acid polypeptide reads, in one-letter code: UDP-N-acetylmuramate--L-alanine ligase (484 aa).

125–131 (GTHGKTT) contacts ATP.

The protein belongs to the MurCDEF family.

The protein resides in the cytoplasm. The catalysed reaction is UDP-N-acetyl-alpha-D-muramate + L-alanine + ATP = UDP-N-acetyl-alpha-D-muramoyl-L-alanine + ADP + phosphate + H(+). The protein operates within cell wall biogenesis; peptidoglycan biosynthesis. Cell wall formation. The protein is UDP-N-acetylmuramate--L-alanine ligase of Buchnera aphidicola subsp. Acyrthosiphon pisum (strain 5A).